A 51-amino-acid chain; its full sequence is DNA-directed RNA polymerases II, IV and V subunit 12 (51 aa).

The Zn(2+) site is built by cysteine 12, cysteine 15, cysteine 29, and cysteine 32.

The protein belongs to the archaeal Rpo12/eukaryotic RPC10 RNA polymerase subunit family. In terms of assembly, component of the RNA polymerase II, IV and V complexes. Associates with the mediator complex. Interacts with NRPD1.

The protein localises to the nucleus. Its function is as follows. DNA-dependent RNA polymerase catalyzes the transcription of DNA into RNA using the four ribonucleoside triphosphates as substrates. Component of RNA polymerase II which synthesizes mRNA precursors and many functional non-coding RNAs. Pol II is the central component of the basal RNA polymerase II transcription machinery. It is composed of mobile elements that move relative to each other. Component of RNA polymerases IV and V which mediate short-interfering RNAs (siRNA) accumulation and subsequent RNA-directed DNA methylation-dependent (RdDM) transcriptional gene silencing (TGS) of endogenous repeated sequences, including transposable elements. This Arabidopsis thaliana (Mouse-ear cress) protein is DNA-directed RNA polymerases II, IV and V subunit 12 (NRPB12).